Reading from the N-terminus, the 233-residue chain is DnaA regulatory inactivator Hda (233 aa).

This sequence belongs to the DnaA family. HdA subfamily. In terms of assembly, the active form seems to be an ADP-bound monomer. Forms the RIDA complex (regulatory inactivation of DnaA) of ATP-DnaA, ADP-Hda and the DNA-loaded beta sliding clamp (dnaN).

Functionally, mediates the interaction of DNA replication initiator protein DnaA with DNA polymerase subunit beta sliding clamp (dnaN). Stimulates hydrolysis of ATP-DnaA to ADP-DnaA, rendering DnaA inactive for reinitiation, a process called regulatory inhibition of DnaA or RIDA. In Shigella boydii serotype 4 (strain Sb227), this protein is DnaA regulatory inactivator Hda.